The chain runs to 50 residues: MLDLNITKLVTTVVIIAACCLFYLLALDSYCDQGGTFSTGICAITTIVPW.

Residues 1–4 (MLDL) are Cytoplasmic-facing. The chain crosses the membrane as a helical span at residues 5–27 (NITKLVTTVVIIAACCLFYLLAL). At 28 to 50 (DSYCDQGGTFSTGICAITTIVPW) the chain is on the periplasmic side.

It belongs to the MgrB family. As to quaternary structure, probably interacts with the periplasmic domain of PhoQ.

The protein localises to the cell inner membrane. Functionally, phoP-regulated transcription is redox-sensitive, being activated when the periplasm becomes more reducing. MgrB acts between DsbA/DsbB and PhoP/PhoQ in this pathway. Represses PhoP/PhoQ signaling, possibly by binding to the periplasmic domain of PhoQ, altering its activity and that of downstream effector PhoP. This Yersinia pestis protein is PhoP/PhoQ regulator MgrB.